A 408-amino-acid polypeptide reads, in one-letter code: Argininosuccinate synthase (408 aa).

ATP is bound by residues 8–16 (AYSGGLDTT) and Ala-35. L-citrulline is bound by residues Tyr-86 and Ser-91. Residue Gly-116 participates in ATP binding. 3 residues coordinate L-aspartate: Thr-118, Asn-122, and Asp-123. An L-citrulline-binding site is contributed by Asn-122. L-citrulline-binding residues include Arg-126, Ser-177, Ser-186, Glu-263, and Tyr-275.

Belongs to the argininosuccinate synthase family. Type 1 subfamily. In terms of assembly, homotetramer.

Its subcellular location is the cytoplasm. The enzyme catalyses L-citrulline + L-aspartate + ATP = 2-(N(omega)-L-arginino)succinate + AMP + diphosphate + H(+). It participates in amino-acid biosynthesis; L-arginine biosynthesis; L-arginine from L-ornithine and carbamoyl phosphate: step 2/3. The sequence is that of Argininosuccinate synthase from Lachnospira eligens (strain ATCC 27750 / DSM 3376 / VPI C15-48 / C15-B4) (Eubacterium eligens).